A 272-amino-acid chain; its full sequence is Regulatory factor X-associated protein (272 aa).

Disordered regions lie at residues 1 to 20 (MEAQGVAEGAGPGAASGVPH), 74 to 142 (LCEG…KTCT), and 175 to 195 (KKKKSDQALNCGGTASTGSAG). Residues 79–94 (GDGEEEAGEDEADLLD) are compositionally biased toward acidic residues. The short motif at 163 to 178 (KKHRNKMYKDKYKKKK) is the Nuclear localization signal element. Lysine 198 participates in a covalent cross-link: Glycyl lysine isopeptide (Lys-Gly) (interchain with G-Cter in SUMO2). The segment at 214–270 (TGSFGDRPARPTLLEQVLNQKRLSLLRSPEVVQFLQKQQQLLNQQVLEQRQQQFPGT) is C-terminal domain.

In terms of assembly, the RFX heterotetrameric complex consists of 2 molecules of RFX5 and one each of RFXAP and RFX-B/RFXANK; with each subunit representing a separate complementation group. RFX forms cooperative DNA binding complexes with X2BP and CBF/NF-Y. RFX associates with CIITA to form an active transcriptional complex. Phosphorylated. In terms of tissue distribution, ubiquitous.

It is found in the nucleus. Functionally, part of the RFX complex that binds to the X-box of MHC II promoters. The protein is Regulatory factor X-associated protein (RFXAP) of Homo sapiens (Human).